Here is a 970-residue protein sequence, read N- to C-terminus: Type III restriction-modification enzyme EcoP15I Res subunit (970 aa).

The helicase-like domain stretch occupies residues 75–540 (AKSNIIDVSM…EVGRGLRLPV (466 aa)). AMP-binding residues include Thr91, Gly122, Phe126, and Asp226. Positions 894–918 (TYSPDFAYVVKTAEGDYLNFIIETK) are endonuclease domain.

This sequence belongs to the type III restriction-modification system Res protein family. In terms of assembly, a heterotetramer with stoichiometry Res(2)Mod(2). A heterotrimer with stoichiometry Res(1)Mod(2). Requires Mg(2+) as cofactor. S-adenosyl-L-methionine serves as cofactor.

It catalyses the reaction Endonucleolytic cleavage of DNA to give specific double-stranded fragments with terminal 5'-phosphates.. A type III restriction enzyme that recognizes 2 inversely oriented double-stranded sequences 5'-CAGCAG-3' and cleaves DNA 25-27 base pairs downstream of one site. DNA restriction requires both the Res and Mod subunits. DNA topology affects its action; relaxed and negatively supercoiled DNA are digested but positively supercoiled DNA is not a good substrate. Interacts with DNA approximately one half-turn downstream of the recognition site. After binding to one recognition site undergoes random one-dimensional diffusion along DNA until it collides with a stationary enzyme bound to the second DNA site, which is when DNA cleavage occurs. The polypeptide is Type III restriction-modification enzyme EcoP15I Res subunit (Escherichia coli).